The following is a 288-amino-acid chain: Adenylate kinase (288 aa).

Position 65–70 (65–70) interacts with ATP; that stretch reads GVGKGT. Residues 85-114 form an NMP region; sequence ATGDLVRDELKSSGPLSKQLAEIVNQGKLV. AMP-binding positions include Thr86, Arg91, 112–114, 142–145, and Gln149; these read KLV and GFPR. Residues 178-226 are LID; that stretch reads GRRICSECGKNFNVASIDVAGENGAPRISMARLNPPFTVCFKLITRADD. Arg179 is a binding site for ATP. Residues Arg223 and Arg234 each coordinate AMP. Gly262 provides a ligand contact to ATP.

The protein belongs to the adenylate kinase family. Monomer.

The protein localises to the cytoplasm. It carries out the reaction AMP + ATP = 2 ADP. Catalyzes the reversible transfer of the terminal phosphate group between ATP and AMP. Plays an important role in cellular energy homeostasis and in adenine nucleotide metabolism. This chain is Adenylate kinase (ADK), found in Solanum tuberosum (Potato).